A 259-amino-acid chain; its full sequence is MLAKRIVPCLDVKDGKVVKGVQFRNHEIVGDIVPLAARYAQEGADELVFYDISASAKGAIVDKSWVSRIAERIDIPFCVAGGIKTAEQAREILAFGADKISINSPALSDPSLIRRLHDEFGRQCVVVGIDSFYDAGSGNYTVKQFTGDEAATKDTRWHTLDWVEEVQRQGCGEIVLNVMNQDGVRQGYDIEQLLKVRAICDVPLIASGGAGTMAHFAEVFTDARVDAALAASVFHKGIINIGELKQFLVSQGIAIRLTE.

Catalysis depends on residues Asp11 and Asp130.

The protein belongs to the HisA/HisF family. In terms of assembly, heterodimer of HisH and HisF.

Its subcellular location is the cytoplasm. The catalysed reaction is 5-[(5-phospho-1-deoxy-D-ribulos-1-ylimino)methylamino]-1-(5-phospho-beta-D-ribosyl)imidazole-4-carboxamide + L-glutamine = D-erythro-1-(imidazol-4-yl)glycerol 3-phosphate + 5-amino-1-(5-phospho-beta-D-ribosyl)imidazole-4-carboxamide + L-glutamate + H(+). The protein operates within amino-acid biosynthesis; L-histidine biosynthesis; L-histidine from 5-phospho-alpha-D-ribose 1-diphosphate: step 5/9. Functionally, IGPS catalyzes the conversion of PRFAR and glutamine to IGP, AICAR and glutamate. The HisF subunit catalyzes the cyclization activity that produces IGP and AICAR from PRFAR using the ammonia provided by the HisH subunit. This chain is Imidazole glycerol phosphate synthase subunit HisF, found in Shewanella amazonensis (strain ATCC BAA-1098 / SB2B).